The primary structure comprises 199 residues: NADH-quinone oxidoreductase subunit C (199 aa).

The protein belongs to the complex I 30 kDa subunit family. In terms of assembly, NDH-1 is composed of 14 different subunits. Subunits NuoB, C, D, E, F, and G constitute the peripheral sector of the complex.

The protein localises to the cell inner membrane. The catalysed reaction is a quinone + NADH + 5 H(+)(in) = a quinol + NAD(+) + 4 H(+)(out). Functionally, NDH-1 shuttles electrons from NADH, via FMN and iron-sulfur (Fe-S) centers, to quinones in the respiratory chain. The immediate electron acceptor for the enzyme in this species is believed to be ubiquinone. Couples the redox reaction to proton translocation (for every two electrons transferred, four hydrogen ions are translocated across the cytoplasmic membrane), and thus conserves the redox energy in a proton gradient. This chain is NADH-quinone oxidoreductase subunit C, found in Rhodobacter capsulatus (Rhodopseudomonas capsulata).